Consider the following 211-residue polypeptide: ATP phosphoribosyltransferase (211 aa).

Belongs to the ATP phosphoribosyltransferase family. Short subfamily. Heteromultimer composed of HisG and HisZ subunits.

The protein localises to the cytoplasm. It carries out the reaction 1-(5-phospho-beta-D-ribosyl)-ATP + diphosphate = 5-phospho-alpha-D-ribose 1-diphosphate + ATP. It functions in the pathway amino-acid biosynthesis; L-histidine biosynthesis; L-histidine from 5-phospho-alpha-D-ribose 1-diphosphate: step 1/9. Its function is as follows. Catalyzes the condensation of ATP and 5-phosphoribose 1-diphosphate to form N'-(5'-phosphoribosyl)-ATP (PR-ATP). Has a crucial role in the pathway because the rate of histidine biosynthesis seems to be controlled primarily by regulation of HisG enzymatic activity. The sequence is that of ATP phosphoribosyltransferase from Pseudomonas fluorescens (strain SBW25).